A 102-amino-acid polypeptide reads, in one-letter code: NADH-quinone oxidoreductase subunit K (102 aa).

The next 3 membrane-spanning stretches (helical) occupy residues 5–25 (IAHY…GIFL), 31–51 (IVIL…FVAF), and 66–86 (FVLT…VVFF).

Belongs to the complex I subunit 4L family. In terms of assembly, NDH-1 is composed of 14 different subunits. Subunits NuoA, H, J, K, L, M, N constitute the membrane sector of the complex.

The protein localises to the cell inner membrane. It catalyses the reaction a quinone + NADH + 5 H(+)(in) = a quinol + NAD(+) + 4 H(+)(out). NDH-1 shuttles electrons from NADH, via FMN and iron-sulfur (Fe-S) centers, to quinones in the respiratory chain. The immediate electron acceptor for the enzyme in this species is believed to be ubiquinone. Couples the redox reaction to proton translocation (for every two electrons transferred, four hydrogen ions are translocated across the cytoplasmic membrane), and thus conserves the redox energy in a proton gradient. This Brucella abortus (strain S19) protein is NADH-quinone oxidoreductase subunit K.